Reading from the N-terminus, the 267-residue chain is DNA repair protein RecO (267 aa).

It belongs to the RecO family.

Involved in DNA repair and RecF pathway recombination. In Moorella thermoacetica (strain ATCC 39073 / JCM 9320), this protein is DNA repair protein RecO.